We begin with the raw amino-acid sequence, 236 residues long: Ubiquitin carboxyl-terminal hydrolase YUH1 (236 aa).

The 227-residue stretch at 7 to 233 folds into the UCH catalytic domain; that stretch reads AVVPIESNPE…LNFAMLGLGP (227 aa). An interaction with ubiquitin region spans residues 10–15; that stretch reads PIESNP. Residue Cys90 is the Nucleophile of the active site. Residues 149 to 157 form an interaction with ubiquitin region; that stretch reads FSTGQSEAP. The active-site Proton donor is His166. The segment at 219–228 is interaction with ubiquitin; that stretch reads NEEDVLNFAM.

This sequence belongs to the peptidase C12 family.

The enzyme catalyses Thiol-dependent hydrolysis of ester, thioester, amide, peptide and isopeptide bonds formed by the C-terminal Gly of ubiquitin (a 76-residue protein attached to proteins as an intracellular targeting signal).. In terms of biological role, deubiquitinating enzyme (DUB) that controls levels of cellular ubiquitin through processing of ubiquitin precursors and ubiquitinated proteins. Thiol protease that recognizes and hydrolyzes a peptide bond at the C-terminal glycine of either ubiquitin or RUB1. Preferentially cleaves ubiquitin from peptides and small adducts. The protein is Ubiquitin carboxyl-terminal hydrolase YUH1 (YUH1) of Saccharomyces cerevisiae (strain ATCC 204508 / S288c) (Baker's yeast).